We begin with the raw amino-acid sequence, 2332 residues long: Genome polyprotein (2332 aa).

Positions 1-201 (MHTTDCFIAL…WKAMVQRKLK (201 aa)) constitute a Peptidase C28 domain. At 1–1480 (MHTTDCFIAL…SFVKRAFKRL (1480 aa)) the chain is on the cytoplasmic side. Catalysis depends on for leader protease activity residues Cys-51, His-148, and Asp-163. Disordered stretches follow at residues 199 to 218 (KLKGAGQSSPATGSQNQSGN) and 238 to 265 (QLGDNAISGGSNEGSTDTTSTHTTNTQN). Gly-202 carries N-myristoyl glycine; by host lipidation. Composition is skewed to polar residues over residues 204 to 218 (GQSSPATGSQNQSGN) and 238 to 251 (QLGDNAISGGSNEG). A compositionally biased stretch (low complexity) spans 252–265 (STDTTSTHTTNTQN). Positions 789-797 (ALLRAATYY) are antigenic epitope. The Cell attachment site motif lies at 868–870 (RGD). The region spanning 1189–1353 (NVHIANLCKV…DGYKINNKLD (165 aa)) is the SF3 helicase domain. 1217–1224 (GKSGQGKS) contacts ATP. The stretch at 1481–1501 (KENFEIVALCLTLLANIVIMI) is an intramembrane region. Topologically, residues 1502–2332 (RETRKRQKMV…RWVNAVCGDA (831 aa)) are cytoplasmic. Composition is skewed to basic and acidic residues over residues 1529-1538 (KTLDEAEKNP) and 1549-1563 (FRERTLPGQKARDDV). The disordered stretch occupies residues 1529–1584 (KTLDEAEKNPLETSGASTVGFRERTLPGQKARDDVNSEPAQPAEEQPQAEGPYAGP). Residues 1566-1578 (EPAQPAEEQPQAE) show a composition bias toward low complexity. O-(5'-phospho-RNA)-tyrosine is present on residues Tyr-1581, Tyr-1604, and Tyr-1628. Residues 1652–1848 (APPTDLQKMV…YCSCVSRSML (197 aa)) enclose the Peptidase C3 domain. The active-site For protease 3C activity; Proton donor/acceptor is His-1695. Active-site for protease 3C activity residues include Asp-1733 and Cys-1812. Positions 1878–1886 (MRKTKLAPT) match the Nuclear localization signal motif. A RdRp catalytic domain is found at 2096–2214 (RNVWDVDYSA…ASDYDLDFEA (119 aa)). The active-site For RdRp activity is Asp-2200.

Belongs to the picornaviruses polyprotein family. In terms of assembly, interacts with host ISG15. Capsid protein VP1: Interacts (via R-G-D motif) with host ITGAV/ITGB6. Interacts (via R-G-D motif) with host ITGAV/ITGB6. Interacts with host MAVS; this interaction inhibits binding of host TRAF3 to MAVS, thereby suppressing interferon-mediated responses. As to quaternary structure, forms homooligomers. In terms of assembly, homohexamer. Interacts with host VIM. Interacts with host BECN1. Interacts with host DCTN3. As to quaternary structure, interacts with RNA-dependent RNA polymerase; this interaction allows 3B-1 to binds 2 polymerases and act as a primer. It also allows the recruitment of the RNA-dependent RNA polymerase to host membranes. In terms of assembly, interacts with RNA-dependent RNA polymerase; this interaction allows 3B-2 to act as a primer. Interacts with RNA-dependent RNA polymerase; this interaction allows 3B-3 to act as a primer. As to quaternary structure, interacts with 3B-1; this interaction allows 3B-1 to binds 2 polymerases and act as a primer. It also allows the recruitment of the RNA-dependent RNA polymerase to host membranes. Interacts with 3B-2; this interaction allows 3B-2 to act as a primer. Interacts with 3B-3; this interaction allows 3B-3 to act as a primer. Post-translationally, removes six residues from its own C-terminus, generating sLb(pro). Specific enzymatic cleavages in vivo by the viral proteases yield a variety of precursors and mature proteins. The polyprotein seems to be cotranslationally cleaved at the 2A/2B junction by a ribosomal skip from one codon to the next without formation of a peptide bond. This process would release the L-P1-2A peptide from the translational complex. In terms of processing, during virion maturation, immature virions are rendered infectious following cleavage of VP0 into VP4 and VP2. This maturation seems to be an autocatalytic event triggered by the presence of RNA in the capsid and is followed by a conformational change of the particle. Post-translationally, myristoylation is required during RNA encapsidation and formation of the mature virus particle. Uridylylated by the polymerase and covalently linked to the 5'-end of genomic RNA. These uridylylated forms act as a nucleotide-peptide primer for the polymerase.

It localises to the host nucleus. The protein resides in the host cytoplasm. It is found in the virion. The protein localises to the host endoplasmic reticulum membrane. Its subcellular location is the host cytoplasmic vesicle membrane. The catalysed reaction is Autocatalytically cleaves itself from the polyprotein of the foot-and-mouth disease virus by hydrolysis of a Lys-|-Gly bond, but then cleaves host cell initiation factor eIF-4G at bonds -Gly-|-Arg- and -Lys-|-Arg-.. The enzyme catalyses a ribonucleoside 5'-triphosphate + H2O = a ribonucleoside 5'-diphosphate + phosphate + H(+). It carries out the reaction RNA(n) + a ribonucleoside 5'-triphosphate = RNA(n+1) + diphosphate. It catalyses the reaction Selective cleavage of Gln-|-Gly bond in the poliovirus polyprotein. In other picornavirus reactions Glu may be substituted for Gln, and Ser or Thr for Gly.. Functionally, autocatalytically cleaves itself from the polyprotein at the L/VP0 junction. Also cleaves the host translation initiation factors EIF4G1 and EIF4G3, in order to shut off the capped cellular mRNA transcription. Plays a role in counteracting host innate antiviral response using diverse mechanisms. Possesses a deubiquitinase activity acting on both 'Lys-48' and 'Lys-63'-linked polyubiquitin chains. In turn, inhibits the ubiquitination and subsequent activation of key signaling molecules of type I IFN response such as host RIGI, TBK1, TRAF3 and TRAF6. Inhibits host NF-kappa-B activity by inducing a decrease in RELA mRNA levels. Cleaves a peptide bond in the C-terminus of host ISG15, resulting in the damaging of this modifier that can no longer be attached to target proteins. Also cleaves host G3BP1 and G3BP2 in order to inhibit cytoplasmic stress granules assembly. Its function is as follows. Lies on the inner surface of the capsid shell. After binding to the host receptor, the capsid undergoes conformational changes. Capsid protein VP4 is released, capsid protein VP1 N-terminus is externalized, and together, they shape a pore in the host membrane through which the viral genome is translocated into the host cell cytoplasm. After genome has been released, the channel shrinks. In terms of biological role, forms an icosahedral capsid of pseudo T=3 symmetry with capsid proteins VP1 and VP3. The capsid is composed of 60 copies of each capsid protein organized in the form of twelve pentamers and encloses the viral positive strand RNA genome. Upon acidifcation in the endosome, dissociates into pentamers. Forms an icosahedral capsid of pseudo T=3 symmetry with capsid proteins VP0 and VP3. The capsid is composed of 60 copies of each capsid protein organized in the form of twelve pentamers and encloses the viral positive strand RNA genome. Upon acidifcation in the endosome, dissociates into pentamers. Functionally, forms an icosahedral capsid of pseudo T=3 symmetry with capsid proteins VP2 and VP3. The capsid is composed of 60 copies of each capsid protein organized in the form of twelve pentamers and encloses the viral positive strand RNA genome. Mediates cell entry by attachment to an integrin receptor, usually host ITGAV/ITGB6. In addition, targets host MAVS to suppress type I IFN pathway. Upon acidifcation in the endosome, dissociates into pentamers. Its function is as follows. Mediates self-processing of the polyprotein by a translational effect termed 'ribosome skipping'. Mechanistically, 2A-mediated cleavage occurs between the C-terminal glycine and the proline of the downstream protein 2B. In the case of foot-and-mouth disease virus, the 2A oligopeptide is post-translationally 'trimmed' from the C-terminus of the upstream protein 1D by 3C proteinase. In terms of biological role, plays an essential role in the virus replication cycle by acting as a viroporin. Creates a pore in the host endoplasmic reticulum and as a consequence releases Ca2+ in the cytoplasm of infected cell. In turn, high levels of cytoplasmic calcium may trigger membrane trafficking and transport of viral ER-associated proteins to viroplasms, sites of viral genome replication. Associates with and induces structural rearrangements of intracellular membranes. Triggers host autophagy by interacting with host BECN1 and thereby promotes viral replication. Participates in viral replication and interacts with host DHX9. Displays RNA-binding, nucleotide binding and NTPase activities. May play a role in virion morphogenesis and viral RNA encapsidation by interacting with the capsid protein VP3. Functionally, plays important roles in virus replication, virulence and host range. Cooperates with host DDX56 to inhibit IRF3 nuclear translocation and subsequent type I interferon production. Its function is as follows. Covalently linked to the 5'-end of both the positive-strand and negative-strand genomic RNAs. Acts as a genome-linked replication primer. In terms of biological role, cysteine protease that generates mature viral proteins from the precursor polyprotein. In addition to its proteolytic activity, binds to viral RNA and thus influences viral genome replication. RNA and substrate bind cooperatively to the protease. RNA-directed RNA polymerase 3D-POL replicates genomic and antigenomic RNA by recognizing replications specific signals. Covalently attaches UMP to a tyrosine of VPg, which is used to prime RNA synthesis. The positive stranded RNA genome is first replicated at virus induced membranous vesicles, creating a dsRNA genomic replication form. This dsRNA is then used as template to synthesize positive stranded RNA genomes. ss(+)RNA genomes are either translated, replicated or encapsidated. This is Genome polyprotein from Foot-and-mouth disease virus (isolate -/Germany/A5Westerwald/1951 serotype A) (FMDV).